The following is a 254-amino-acid chain: Very-long-chain (3R)-3-hydroxyacyl-CoA dehydratase 2 (254 aa).

A compositionally biased stretch (low complexity) spans 1-10 (MAAAAATAAT). Positions 1–34 (MAAAAATAATKGNGGGSGRVGAGDSSGARKKKGP) are disordered. A2 carries the post-translational modification N-acetylalanine. Residues 2-41 (AAAAATAATKGNGGGSGRVGAGDSSGARKKKGPGPVATAY) are Cytoplasmic-facing. Residues 12-21 (GNGGGSGRVG) are compositionally biased toward gly residues. The helical transmembrane segment at 42–60 (LVIYNVVMTAGWLVIAVGL) threads the bilayer. The Lumenal portion of the chain corresponds to 61–79 (VRAYLAKGSYHSLYYSIER). Residues 80–97 (PLKFFQTGALLEILHCAI) traverse the membrane as a helical segment. Over 98-107 (GIVPSSVVLT) the chain is Cytoplasmic. Residues 108–125 (SFQVMSRVFLIWAVTHSV) form a helical membrane-spanning segment. Over 126–130 (KEVQS) the chain is Lumenal. Residues 131-146 (EDSVLLFVIAWTITEI) traverse the membrane as a helical segment. At 147–169 (IRYSFYTFSLLNHLPYIIKWARY) the chain is on the cytoplasmic side. A helical membrane pass occupies residues 170–187 (TLFIVLYPMGVTGELLTI). Catalysis depends on residues Y176 and E183. Residues 188-217 (YAALPFVRQAGLYSISLPNKYNFSFDYHAF) are Lumenal-facing. Residues 198–214 (GLYSISLPNKYNFSFDY) form a may be involved in interaction with TECR region. Residue N209 is glycosylated (N-linked (GlcNAc...) asparagine). The helical transmembrane segment at 218–235 (LILIMISYIPLFPQLYFH) threads the bilayer. The Cytoplasmic portion of the chain corresponds to 236–254 (MIHQRRKVLSHTEEHKKFE).

It belongs to the very long-chain fatty acids dehydratase HACD family. May interact with enzymes of the ELO family (including ELOVL1); with those enzymes that mediate condensation, the first of the four steps of the reaction cycle responsible for fatty acids elongation, may be part of a larger fatty acids elongase complex. Interacts with BCAP31. Interacts with TECR.

It localises to the endoplasmic reticulum membrane. It catalyses the reaction a very-long-chain (3R)-3-hydroxyacyl-CoA = a very-long-chain (2E)-enoyl-CoA + H2O. It carries out the reaction (3R)-hydroxyhexadecanoyl-CoA = (2E)-hexadecenoyl-CoA + H2O. The enzyme catalyses (3R)-hydroxyoctadecanoyl-CoA = (2E)-octadecenoyl-CoA + H2O. The catalysed reaction is (3R)-hydroxyeicosanoyl-CoA = (2E)-eicosenoyl-CoA + H2O. It catalyses the reaction (3R)-hydroxydocosanoyl-CoA = (2E)-docosenoyl-CoA + H2O. It carries out the reaction (3R)-hydroxytetracosanoyl-CoA = (2E)-tetracosenoyl-CoA + H2O. The enzyme catalyses (3R)-hydroxyhexacosanoyl-CoA = (2E)-hexacosenoyl-CoA + H2O. The protein operates within lipid metabolism; fatty acid biosynthesis. Its function is as follows. Catalyzes the third of the very long-chain fatty acids (VLCFA) elongation four-step cycle (condensation, reduction, dehydration, and reduction). This endoplasmic reticulum-elongation process is characterized by the addition of two carbons to the lipid chain through each cycle. This enzyme catalyzes the dehydration of the 3-hydroxyacyl-CoA intermediate into trans-2,3-enoyl-CoA, within each cycle of elongation. Therefore, it participates in the production of various VLCFAs involved in multiple biological processes as precursors of membrane lipids and lipid mediators. The protein is Very-long-chain (3R)-3-hydroxyacyl-CoA dehydratase 2 of Mus musculus (Mouse).